The primary structure comprises 202 residues: Potassium-transporting ATPase KdpC subunit (202 aa).

Residues 7 to 27 form a helical membrane-spanning segment; that stretch reads PAIFVLLALTLITGLLYPLAM. The tract at residues 66–103 is disordered; it reads FHGRPSATSTADPNDSTKTVPAPYNAANSSGSNLGPTS. 2 stretches are compositionally biased toward polar residues: residues 71–84 and 91–101; these read SATSTADPNDSTKT and AANSSGSNLGP.

This sequence belongs to the KdpC family. The system is composed of three essential subunits: KdpA, KdpB and KdpC.

The protein localises to the cell inner membrane. Functionally, part of the high-affinity ATP-driven potassium transport (or Kdp) system, which catalyzes the hydrolysis of ATP coupled with the electrogenic transport of potassium into the cytoplasm. This subunit acts as a catalytic chaperone that increases the ATP-binding affinity of the ATP-hydrolyzing subunit KdpB by the formation of a transient KdpB/KdpC/ATP ternary complex. In Bradyrhizobium sp. (strain ORS 278), this protein is Potassium-transporting ATPase KdpC subunit.